A 352-amino-acid chain; its full sequence is Photosystem II D2 protein (352 aa).

The chain crosses the membrane as a helical span at residues 40–60; that stretch reads CAYMALGGWLTGTTFVTSWYT. Histidine 117 provides a ligand contact to chlorophyll a. The chain crosses the membrane as a helical span at residues 124-140; the sequence is GFMLRQFEIARLVGIRP. Pheophytin a contacts are provided by glutamine 129 and asparagine 142. The helical transmembrane segment at 152-165 threads the bilayer; that stretch reads VFVSVFLMYPLGQS. Histidine 197 serves as a coordination point for chlorophyll a. A helical transmembrane segment spans residues 207 to 227; it reads GALLCAIHGATVENTLFEDGD. Residues histidine 214 and phenylalanine 261 each coordinate a plastoquinone. Histidine 214 contributes to the Fe cation binding site. Fe cation is bound at residue histidine 268. The chain crosses the membrane as a helical span at residues 278-294; sequence GLWTSSIGIIGLALNLR.

Belongs to the reaction center PufL/M/PsbA/D family. PSII is composed of 1 copy each of membrane proteins PsbA, PsbB, PsbC, PsbD, PsbE, PsbF, PsbH, PsbI, PsbJ, PsbK, PsbL, PsbM, PsbT, PsbX, PsbY, PsbZ, Psb30/Ycf12, peripheral proteins PsbO, CyanoQ (PsbQ), PsbU, PsbV and a large number of cofactors. It forms dimeric complexes. The D1/D2 heterodimer binds P680, chlorophylls that are the primary electron donor of PSII, and subsequent electron acceptors. It shares a non-heme iron and each subunit binds pheophytin, quinone, additional chlorophylls, carotenoids and lipids. There is also a Cl(-1) ion associated with D1 and D2, which is required for oxygen evolution. The PSII complex binds additional chlorophylls, carotenoids and specific lipids. serves as cofactor.

The protein resides in the cellular thylakoid membrane. The enzyme catalyses 2 a plastoquinone + 4 hnu + 2 H2O = 2 a plastoquinol + O2. Functionally, photosystem II (PSII) is a light-driven water:plastoquinone oxidoreductase that uses light energy to abstract electrons from H(2)O, generating O(2) and a proton gradient subsequently used for ATP formation. It consists of a core antenna complex that captures photons, and an electron transfer chain that converts photonic excitation into a charge separation. The D1/D2 (PsbA/PsbD) reaction center heterodimer binds P680, the primary electron donor of PSII as well as several subsequent electron acceptors. D2 is needed for assembly of a stable PSII complex. The sequence is that of Photosystem II D2 protein from Synechococcus sp. (strain RCC307).